We begin with the raw amino-acid sequence, 166 residues long: NAD(P)H-quinone oxidoreductase subunit I, chloroplastic (166 aa).

4Fe-4S ferredoxin-type domains follow at residues 55–84 (GRIHFEFDKCIACEVCVRVCPIDLPVVDWK) and 95–124 (LNYSIDFGICIFCGNCVEYCPTNCLSMTEE). Residues cysteine 64, cysteine 67, cysteine 70, cysteine 74, cysteine 104, cysteine 107, cysteine 110, and cysteine 114 each contribute to the [4Fe-4S] cluster site.

The protein belongs to the complex I 23 kDa subunit family. As to quaternary structure, NDH is composed of at least 16 different subunits, 5 of which are encoded in the nucleus. The cofactor is [4Fe-4S] cluster.

It is found in the plastid. Its subcellular location is the chloroplast thylakoid membrane. It catalyses the reaction a plastoquinone + NADH + (n+1) H(+)(in) = a plastoquinol + NAD(+) + n H(+)(out). The catalysed reaction is a plastoquinone + NADPH + (n+1) H(+)(in) = a plastoquinol + NADP(+) + n H(+)(out). Functionally, NDH shuttles electrons from NAD(P)H:plastoquinone, via FMN and iron-sulfur (Fe-S) centers, to quinones in the photosynthetic chain and possibly in a chloroplast respiratory chain. The immediate electron acceptor for the enzyme in this species is believed to be plastoquinone. Couples the redox reaction to proton translocation, and thus conserves the redox energy in a proton gradient. This is NAD(P)H-quinone oxidoreductase subunit I, chloroplastic from Guardiola tulocarpus.